A 31-amino-acid chain; its full sequence is Photosystem I reaction center subunit XII (31 aa).

The chain crosses the membrane as a helical span at residues 6–25; the sequence is TQILAALVVALLPAFLAFRL.

This sequence belongs to the PsaM family.

It localises to the cellular thylakoid membrane. This chain is Photosystem I reaction center subunit XII, found in Synechocystis sp. (strain ATCC 27184 / PCC 6803 / Kazusa).